Consider the following 104-residue polypeptide: Circadian clock oscillator protein KaiB (104 aa).

This sequence belongs to the KaiB family. As to quaternary structure, the KaiABC complex composition changes during the circadian cycle to control KaiC phosphorylation. Complexes KaiC(6), KaiA(2-4):KaiC(6), KaiB(6):KaiC(6) and KaiC(6):KaiB(6):KaiA(12) are among the most important forms, many form cooperatively. Undergoes a major conformational rearrangment; in the free state forms homotetramers as a dimer of dimers. When bound to the CI domain of KaiC switches to a monomeric thioredoxin-fold (KaiB(fs)). KaiB(fs) binds CikA, leading it to dephosphorylate phospho-RpaA.

In terms of biological role, key component of the KaiABC oscillator complex, which constitutes the main circadian regulator in cyanobacteria. Complex composition changes during the circadian cycle to control KaiC phosphorylation. KaiA stimulates KaiC autophosphorylation, while KaiB sequesters KaiA, leading to KaiC autodephosphorylation. Phospho-Ser-431 KaiC accumulation triggers binding of KaiB to form the KaiB(6):KaiC(6) complex, leading to changes in output regulators CikA and SasA. KaiB switches to a thioredoxin-like fold (KaiB(fs)) when bound to KaiC. KaiB(6):KaiC(6) formation exposes a site for KaiA binding that sequesters KaiA from KaiC, making the KaiC(6):KaiB(6):KaiA(12) complex that results in KaiC autodephosphorylation. Its function is as follows. A metamorphic protein which reversibly switches between an inactive tetrameric fold and a rare, thioredoxin-like monomeric fold (KaiB(fs)). KaiB(fs) binds phospho-KaiC, KaiA and CikA. KaiA and CikA compete for binding to KaiB(fs), and KaiB(fs) and SasA compete for binding to KaiC, thus the clock oscillator and output signal pathway are tightly coupled. This Picosynechococcus sp. (strain ATCC 27264 / PCC 7002 / PR-6) (Agmenellum quadruplicatum) protein is Circadian clock oscillator protein KaiB.